Reading from the N-terminus, the 64-residue chain is Long neurotoxin MS5 (64 aa).

Intrachain disulfides connect Cys-3–Cys-24, Cys-6–Cys-11, Cys-17–Cys-41, Cys-45–Cys-57, and Cys-58–Cys-63.

This sequence belongs to the three-finger toxin family. Ancestral subfamily. In terms of tissue distribution, expressed by the venom gland.

It is found in the secreted. Its function is as follows. Produces peripheral paralysis by blocking neuromuscular transmission at the postsynaptic site. Very weak inhibitor of the endogenous nicotinic acetylcholine receptors (nAChR) in the human rhabdomyosarcoma TE 671 cell line. This neurotoxin is lethal to zebrafish by injection at the back of the dorsolateral region, but is not toxic to mice by intraperitoneal injection. This Micrurus surinamensis (Surinam coral snake) protein is Long neurotoxin MS5.